A 207-amino-acid polypeptide reads, in one-letter code: Guanylate kinase (207 aa).

The region spanning 4–184 is the Guanylate kinase-like domain; the sequence is GILFIISAPS…AINDLRTIII (181 aa). Residue 11–18 participates in ATP binding; that stretch reads APSGTGKS.

Belongs to the guanylate kinase family.

It localises to the cytoplasm. The catalysed reaction is GMP + ATP = GDP + ADP. Its function is as follows. Essential for recycling GMP and indirectly, cGMP. This is Guanylate kinase from Buchnera aphidicola subsp. Schizaphis graminum (strain Sg).